A 130-amino-acid chain; its full sequence is Small ribosomal subunit protein uS9 (130 aa).

It belongs to the universal ribosomal protein uS9 family.

The sequence is that of Small ribosomal subunit protein uS9 from Oceanobacillus iheyensis (strain DSM 14371 / CIP 107618 / JCM 11309 / KCTC 3954 / HTE831).